Reading from the N-terminus, the 323-residue chain is Methionyl-tRNA formyltransferase (323 aa).

113–116 contributes to the (6S)-5,6,7,8-tetrahydrofolate binding site; it reads SLLP.

This sequence belongs to the Fmt family.

The catalysed reaction is L-methionyl-tRNA(fMet) + (6R)-10-formyltetrahydrofolate = N-formyl-L-methionyl-tRNA(fMet) + (6S)-5,6,7,8-tetrahydrofolate + H(+). Its function is as follows. Attaches a formyl group to the free amino group of methionyl-tRNA(fMet). The formyl group appears to play a dual role in the initiator identity of N-formylmethionyl-tRNA by promoting its recognition by IF2 and preventing the misappropriation of this tRNA by the elongation apparatus. In Porphyromonas gingivalis (strain ATCC 33277 / DSM 20709 / CIP 103683 / JCM 12257 / NCTC 11834 / 2561), this protein is Methionyl-tRNA formyltransferase.